Reading from the N-terminus, the 111-residue chain is Ig heavy chain V-III region HPC76 (111 aa).

Residues 1 to 110 (ESGGGLVQPG…WGQGTTLTVS (110 aa)) enclose the Ig-like domain.

This Mus musculus (Mouse) protein is Ig heavy chain V-III region HPC76.